Here is a 120-residue protein sequence, read N- to C-terminus: Large ribosomal subunit protein bL17 (120 aa).

It belongs to the bacterial ribosomal protein bL17 family. As to quaternary structure, part of the 50S ribosomal subunit. Contacts protein L32.

This chain is Large ribosomal subunit protein bL17, found in Mesomycoplasma hyopneumoniae (strain 7448) (Mycoplasma hyopneumoniae).